Here is a 337-residue protein sequence, read N- to C-terminus: Serpentine receptor class beta-6 (337 aa).

A run of 7 helical transmembrane segments spans residues Gln20–Phe40, Ile62–Leu82, Ile98–Thr118, Ile138–Phe158, Trp183–Val203, Thr234–Ile254, and Gly273–Leu293.

The protein belongs to the nematode receptor-like protein srb family. As to expression, expressed in the ADL, ADF and ASH chemosensory neurons in the head and in the PHA and PHB chemosensory neurons in the tail. Low expression also observed in the egg-laying structures in the mid-body region.

The protein resides in the cell membrane. Functionally, mediates recognition and avoidance of Streptomyces species by detecting dodecanoic acid secreted by the bacteria. Also mediates avoidance of decanoic acid which is not secreted by Streptomyces species but this may represent an additional important avoidance response in the environment. This Caenorhabditis elegans protein is Serpentine receptor class beta-6 (srb-6).